The sequence spans 58 residues: Large ribosomal subunit protein uL30 (58 aa).

The protein belongs to the universal ribosomal protein uL30 family. In terms of assembly, part of the 50S ribosomal subunit.

The polypeptide is Large ribosomal subunit protein uL30 (Acinetobacter baylyi (strain ATCC 33305 / BD413 / ADP1)).